A 347-amino-acid chain; its full sequence is FMRFamide-related peptides (347 aa).

The signal sequence occupies residues 1–22 (MGIALMFLLALYQMQSAIHSEI). Positions 23 to 102 (IDTPNYAGNS…RYKYDPELEA (80 aa)) are excised as a propeptide. The residue at position 114 (Phe114) is a Phenylalanine amide. Position 146 is a tyrosine amide (Tyr146). Phenylalanine amide is present on residues Phe157, Phe168, Phe179, Phe190, Phe201, Phe212, Phe223, and Phe232. The propeptide occupies 235–240 (SPHEEL). A phenylalanine amide mark is found at Phe250 and Phe259. Position 270 is a serine amide (Ser270). Residue Phe280 is modified to Phenylalanine amide. A propeptide spanning residues 283–347 (SLKPAAPESK…SVEQDQFFGQ (65 aa)) is cleaved from the precursor. Residues 283-347 (SLKPAAPESK…SVEQDQFFGQ (65 aa)) form a disordered region. Residues 305–320 (SPVDKAMTELFKKQEL) show a composition bias toward basic and acidic residues. Positions 321-347 (QDQQVKNGAQATTTQDGSVEQDQFFGQ) are enriched in polar residues.

It belongs to the FARP (FMRFamide related peptide) family. In terms of processing, this precursor includes 13 peptides that have FMRF or related sequences at their C-termini, and other putative neuropeptides.

Its subcellular location is the secreted. Its function is as follows. In insects, FMRFamide and related peptides have modulatory actions at skeletal neuromuscular junctions, and peptides that are immunologically related to FMRFamide are released into the circulation from neurohemal organs. The sequence is that of FMRFamide-related peptides from Drosophila melanogaster (Fruit fly).